The primary structure comprises 46 residues: uncharacterized protein (46 aa).

This is an uncharacterized protein from Escherichia coli (Bacteriophage T4).